The sequence spans 449 residues: Allantoinase (449 aa).

Residues histidine 61, histidine 63, lysine 148, histidine 184, histidine 240, and aspartate 313 each coordinate Zn(2+). An N6-carboxylysine modification is found at lysine 148.

It belongs to the metallo-dependent hydrolases superfamily. Allantoinase family. In terms of assembly, homotetramer. Requires Zn(2+) as cofactor. In terms of processing, carboxylation allows a single lysine to coordinate two zinc ions.

The enzyme catalyses (S)-allantoin + H2O = allantoate + H(+). It participates in nitrogen metabolism; (S)-allantoin degradation; allantoate from (S)-allantoin: step 1/1. Functionally, catalyzes the conversion of allantoin (5-ureidohydantoin) to allantoic acid by hydrolytic cleavage of the five-member hydantoin ring. The chain is Allantoinase from Desulfitobacterium hafniense (strain Y51).